The sequence spans 188 residues: Elongation factor P (188 aa).

Belongs to the elongation factor P family.

The protein localises to the cytoplasm. It participates in protein biosynthesis; polypeptide chain elongation. Involved in peptide bond synthesis. Stimulates efficient translation and peptide-bond synthesis on native or reconstituted 70S ribosomes in vitro. Probably functions indirectly by altering the affinity of the ribosome for aminoacyl-tRNA, thus increasing their reactivity as acceptors for peptidyl transferase. The sequence is that of Elongation factor P from Caulobacter sp. (strain K31).